We begin with the raw amino-acid sequence, 131 residues long: Small ribosomal subunit protein bS6 (131 aa).

Positions 100 to 131 (SPMVKAKDERRSRDYSLEDANMDAEEAGDSEE) are disordered. Positions 104 to 115 (KAKDERRSRDYS) are enriched in basic and acidic residues. A compositionally biased stretch (acidic residues) spans 119-131 (ANMDAEEAGDSEE).

The protein belongs to the bacterial ribosomal protein bS6 family.

Binds together with bS18 to 16S ribosomal RNA. The chain is Small ribosomal subunit protein bS6 from Photorhabdus laumondii subsp. laumondii (strain DSM 15139 / CIP 105565 / TT01) (Photorhabdus luminescens subsp. laumondii).